The following is a 403-amino-acid chain: Peroxisomal membrane protein PEX13 (403 aa).

A compositionally biased stretch (pro residues) spans methionine 1–proline 11. The disordered stretch occupies residues methionine 1–asparagine 69. Topologically, residues methionine 1–glutamate 134 are peroxisomal matrix. The span at proline 59–asparagine 69 shows a compositional bias: polar residues. A helical transmembrane segment spans residues serine 135–tyrosine 155. The segment at methionine 145–serine 233 is targeting to peroxisomes. At asparagine 156 to histidine 174 the chain is on the cytoplasmic side. Residues phenylalanine 175–tyrosine 192 traverse the membrane as a helical segment. Positions phenylalanine 175 to glutamine 196 are interaction with PEX19. The Peroxisomal matrix portion of the chain corresponds to arginine 193–serine 233. The chain crosses the membrane as a helical span at residues tryptophan 234–leucine 254. At serine 255–leucine 403 the chain is on the cytoplasmic side. Positions aspartate 272–lysine 336 constitute an SH3 domain. Serine 354 carries the post-translational modification Phosphoserine.

The protein belongs to the peroxin-13 family. As to quaternary structure, interacts (via SH3 domain) with PEX14 (via SH3-binding motif); forming the PEX13-PEX14 docking complex. Interacts with PEX19.

It localises to the peroxisome membrane. Its function is as follows. Component of the PEX13-PEX14 docking complex, a translocon channel that specifically mediates the import of peroxisomal cargo proteins bound to PEX5 receptor. The PEX13-PEX14 docking complex forms a large import pore which can be opened to a diameter of about 9 nm. Mechanistically, PEX5 receptor along with cargo proteins associates with the PEX14 subunit of the PEX13-PEX14 docking complex in the cytosol, leading to the insertion of the receptor into the organelle membrane with the concomitant translocation of the cargo into the peroxisome matrix. Involved in the import of PTS1- and PTS2-type containing proteins. The polypeptide is Peroxisomal membrane protein PEX13 (PEX13) (Bos taurus (Bovine)).